We begin with the raw amino-acid sequence, 450 residues long: MGKYFGTDGVRGVANSELTPELAFRLGRMGGYVLTRHVGEHPRVLVARDTRISGEMLESALIAGLVSVGIEVMRLGVISTPGVAYLTKAQGASASVMISASHNPVDDNGIKFFGSDGFKLSDDQEEEIEQLLDTAEDTLPRPSGEGLGTVSDYFEGKQKYIQYLKQTIENDFNGYHIALDCANGATSGLATHLFADLDAEISSMGASPNGLNINDGVGSTHPEALAAFVLDKKADVGLAFDGDGDRVIAIDEIGQIVDGDKIMFICAKYLREQGLLNSNTIVSTVMSNLGFYKGLRELEIEDVQTAVGDRYVVEAMREGNYNLGGEQSGHIIFLDHNTTGDGLLSGIQLINVMKATGKKLSELASEMKTFPQKLENIRVSDKNHVTDNPKVSKVISEVEAEMAGNGRVLVRPSGTEPLVRVMVEAATKEETDEYCERISAVVRSEMALND.

Ser101 (phosphoserine intermediate) is an active-site residue. Residues Ser101, Asp241, Asp243, and Asp245 each coordinate Mg(2+). Ser101 bears the Phosphoserine mark.

The protein belongs to the phosphohexose mutase family. Mg(2+) serves as cofactor. Activated by phosphorylation.

The catalysed reaction is alpha-D-glucosamine 1-phosphate = D-glucosamine 6-phosphate. Catalyzes the conversion of glucosamine-6-phosphate to glucosamine-1-phosphate. The sequence is that of Phosphoglucosamine mutase from Listeria welshimeri serovar 6b (strain ATCC 35897 / DSM 20650 / CCUG 15529 / CIP 8149 / NCTC 11857 / SLCC 5334 / V8).